Here is a 233-residue protein sequence, read N- to C-terminus: Large ribosomal subunit protein uL1 (233 aa).

It belongs to the universal ribosomal protein uL1 family. As to quaternary structure, part of the 50S ribosomal subunit.

Binds directly to 23S rRNA. The L1 stalk is quite mobile in the ribosome, and is involved in E site tRNA release. Functionally, protein L1 is also a translational repressor protein, it controls the translation of the L11 operon by binding to its mRNA. The protein is Large ribosomal subunit protein uL1 of Photobacterium profundum (strain SS9).